Consider the following 180-residue polypeptide: Large ribosomal subunit protein uL5 (180 aa).

Belongs to the universal ribosomal protein uL5 family. Part of the 50S ribosomal subunit; part of the 5S rRNA/L5/L18/L25 subcomplex. Contacts the 5S rRNA and the P site tRNA. Forms a bridge to the 30S subunit in the 70S ribosome.

In terms of biological role, this is one of the proteins that bind and probably mediate the attachment of the 5S RNA into the large ribosomal subunit, where it forms part of the central protuberance. In the 70S ribosome it contacts protein S13 of the 30S subunit (bridge B1b), connecting the 2 subunits; this bridge is implicated in subunit movement. Contacts the P site tRNA; the 5S rRNA and some of its associated proteins might help stabilize positioning of ribosome-bound tRNAs. The protein is Large ribosomal subunit protein uL5 of Xanthomonas campestris pv. campestris (strain 8004).